The following is a 449-amino-acid chain: UDP-N-acetylmuramoylalanine--D-glutamate ligase (449 aa).

G118–T124 lines the ATP pocket.

Belongs to the MurCDEF family.

The protein resides in the cytoplasm. It catalyses the reaction UDP-N-acetyl-alpha-D-muramoyl-L-alanine + D-glutamate + ATP = UDP-N-acetyl-alpha-D-muramoyl-L-alanyl-D-glutamate + ADP + phosphate + H(+). The protein operates within cell wall biogenesis; peptidoglycan biosynthesis. Its function is as follows. Cell wall formation. Catalyzes the addition of glutamate to the nucleotide precursor UDP-N-acetylmuramoyl-L-alanine (UMA). The polypeptide is UDP-N-acetylmuramoylalanine--D-glutamate ligase (Staphylococcus carnosus (strain TM300)).